The primary structure comprises 336 residues: uncharacterized protein (336 aa).

ATP is bound at residue 29-36; sequence GPKSSGKS.

Belongs to the archaeal ATPase family.

This is an uncharacterized protein from Methanocaldococcus jannaschii (strain ATCC 43067 / DSM 2661 / JAL-1 / JCM 10045 / NBRC 100440) (Methanococcus jannaschii).